A 425-amino-acid polypeptide reads, in one-letter code: Trigger factor (425 aa).

Residues 163-248 enclose the PPIase FKBP-type domain; that stretch reads GDTAVIDFEG…VHEIKTKELP (86 aa).

This sequence belongs to the FKBP-type PPIase family. Tig subfamily.

It localises to the cytoplasm. The enzyme catalyses [protein]-peptidylproline (omega=180) = [protein]-peptidylproline (omega=0). In terms of biological role, involved in protein export. Acts as a chaperone by maintaining the newly synthesized protein in an open conformation. Functions as a peptidyl-prolyl cis-trans isomerase. This chain is Trigger factor, found in Bacillus cereus (strain Q1).